A 56-amino-acid chain; its full sequence is Mambaquaretin-9 (56 aa).

Intrachain disulfides connect Cys5–Cys54, Cys14–Cys37, and Cys29–Cys50. One can recognise a BPTI/Kunitz inhibitor domain in the interval Cys5 to Val56.

It belongs to the venom Kunitz-type family. As to expression, expressed by the venom gland.

The protein localises to the secreted. In terms of biological role, interacts with vasopressin V2 receptor (V2R/AVPR2), probably in a selective manner. Inhibits vasopressin binding human V2R in the nanomolar range (Ki=45.1 nM), and also potently inhibits vasopressin-induced cAMP production (IC(50)=111 nM). In vivo, intraperitoneal injection of this protein into rats increases diuresis, without any loss of electrolytes. This chain is Mambaquaretin-9, found in Dendroaspis viridis (Western green mamba).